A 311-amino-acid polypeptide reads, in one-letter code: Giardin subunit gamma (311 aa).

Positions 185–233 (GLQTEINSLEAIIEREFAQAANRLNQEVSNFKESFDASERNIKLQKKHV) form a coiled coil.

In terms of assembly, interacts with EB1.

Its subcellular location is the cytoplasm. It is found in the cytoskeleton. In terms of biological role, giardins are involved in parasite attachment to the intestinal mucosa and in the cytoskeletal disassembly and reassembly that marks the transition from infectious trophozoite to transmissible cyst. They may interact with other cytoskeletal proteins such as microtubules in the microribbons or crossbridges, to maintain the integrity of the ventral disk. Involved in formation of the ventral disk. The chain is Giardin subunit gamma from Giardia intestinalis (Giardia lamblia).